Here is a 375-residue protein sequence, read N- to C-terminus: Solute carrier family 35 member F2 (375 aa).

Methionine 1 is modified (N-acetylmethionine). Serine 5, serine 22, serine 25, and serine 28 each carry phosphoserine. 10 consecutive transmembrane segments (helical) span residues 39–59, 73–93, 108–126, 136–156, 165–185, 195–215, 227–247, 263–283, 290–310, and 314–334; these read ILKT…TAIT, MLQS…MLAF, WWKY…YLIV, SVQL…WFIL, FIAV…DILA, VLIG…SNVC, EFLG…LLIV, LLFV…PLVI, SVNL…LFLF, and FSGL…LYCS. A Phosphoserine modification is found at serine 372.

This sequence belongs to the SLC35F solute transporter family.

Its subcellular location is the membrane. Functionally, putative solute transporter. This Mus musculus (Mouse) protein is Solute carrier family 35 member F2 (Slc35f2).